Reading from the N-terminus, the 158-residue chain is Regulator of sigma D (158 aa).

Belongs to the Rsd/AlgQ family. As to quaternary structure, interacts with RpoD.

Its subcellular location is the cytoplasm. In terms of biological role, binds RpoD and negatively regulates RpoD-mediated transcription activation by preventing the interaction between the primary sigma factor RpoD with the catalytic core of the RNA polymerase and with promoter DNA. May be involved in replacement of the RNA polymerase sigma subunit from RpoD to RpoS during the transition from exponential growth to the stationary phase. The sequence is that of Regulator of sigma D from Escherichia fergusonii (strain ATCC 35469 / DSM 13698 / CCUG 18766 / IAM 14443 / JCM 21226 / LMG 7866 / NBRC 102419 / NCTC 12128 / CDC 0568-73).